We begin with the raw amino-acid sequence, 382 residues long: ATP phosphoribosyltransferase regulatory subunit (382 aa).

It belongs to the class-II aminoacyl-tRNA synthetase family. HisZ subfamily. As to quaternary structure, heteromultimer composed of HisG and HisZ subunits.

It is found in the cytoplasm. It functions in the pathway amino-acid biosynthesis; L-histidine biosynthesis; L-histidine from 5-phospho-alpha-D-ribose 1-diphosphate: step 1/9. In terms of biological role, required for the first step of histidine biosynthesis. May allow the feedback regulation of ATP phosphoribosyltransferase activity by histidine. The polypeptide is ATP phosphoribosyltransferase regulatory subunit (Lacticaseibacillus casei (strain BL23) (Lactobacillus casei)).